The chain runs to 397 residues: Elongation factor Tu (397 aa).

The 198-residue stretch at 10–207 folds into the tr-type G domain; the sequence is KPHVNIGTIG…AVDTYIEEPK (198 aa). Residues 19–26 are G1; it reads GHVDHGKT. 19–26 provides a ligand contact to GTP; sequence GHVDHGKT. Thr26 lines the Mg(2+) pocket. The tract at residues 60-64 is G2; that stretch reads GITIN. Positions 81 to 84 are G3; sequence DCPG. Residues 81 to 85 and 136 to 139 each bind GTP; these read DCPGH and NKID. A G4 region spans residues 136 to 139; it reads NKID. A G5 region spans residues 177–179; it reads SAL.

It belongs to the TRAFAC class translation factor GTPase superfamily. Classic translation factor GTPase family. EF-Tu/EF-1A subfamily. As to quaternary structure, monomer.

It is found in the cytoplasm. The enzyme catalyses GTP + H2O = GDP + phosphate + H(+). In terms of biological role, GTP hydrolase that promotes the GTP-dependent binding of aminoacyl-tRNA to the A-site of ribosomes during protein biosynthesis. This chain is Elongation factor Tu, found in Metamycoplasma hominis (strain ATCC 23114 / DSM 25592 / NBRC 14850 / NCTC 10111 / PG21) (Mycoplasma hominis).